An 847-amino-acid chain; its full sequence is Putative disease resistance RPP13-like protein 3 (847 aa).

Positions 24 to 41 (LMGVKDDLEELKTELTCI) form a coiled coil. The 311-residue stretch at 143–453 (TNVRVRQLRR…AEGFIQEDEE (311 aa)) folds into the NB-ARC domain. 192–199 (GMGGLGKT) is a binding site for ATP.

This sequence belongs to the disease resistance NB-LRR family. RPP13 subfamily.

Its function is as follows. Potential disease resistance protein. This Arabidopsis thaliana (Mouse-ear cress) protein is Putative disease resistance RPP13-like protein 3 (RPP13L3).